The chain runs to 98 residues: Large ribosomal subunit protein uL23 (98 aa).

This sequence belongs to the universal ribosomal protein uL23 family. In terms of assembly, part of the 50S ribosomal subunit. Contacts protein L29, and trigger factor when it is bound to the ribosome.

One of the early assembly proteins it binds 23S rRNA. One of the proteins that surrounds the polypeptide exit tunnel on the outside of the ribosome. Forms the main docking site for trigger factor binding to the ribosome. The sequence is that of Large ribosomal subunit protein uL23 from Marinomonas sp. (strain MWYL1).